A 266-amino-acid polypeptide reads, in one-letter code: Large ribosomal subunit protein eL8 (266 aa).

Residues lysine 11, lysine 20, and lysine 21 each participate in a glycyl lysine isopeptide (Lys-Gly) (interchain with G-Cter in SUMO2) cross-link. Lysine 34 carries the N6-acetyllysine modification. Residue lysine 48 forms a Glycyl lysine isopeptide (Lys-Gly) (interchain with G-Cter in SUMO2) linkage. Lysine 97 bears the N6-acetyllysine; alternate mark. Lysine 97 participates in a covalent cross-link: Glycyl lysine isopeptide (Lys-Gly) (interchain with G-Cter in SUMO2); alternate. Lysine 125 participates in a covalent cross-link: Glycyl lysine isopeptide (Lys-Gly) (interchain with G-Cter in SUMO2). Lysine 217 is modified (N6-acetyllysine). Lysine 245 is covalently cross-linked (Glycyl lysine isopeptide (Lys-Gly) (interchain with G-Cter in SUMO2)).

Belongs to the eukaryotic ribosomal protein eL8 family. As to quaternary structure, component of the large ribosomal subunit. Interacts with CRY1. Interacts with DICER1, AGO2, TARBP2, MOV10 and EIF6; they form a large RNA-induced silencing complex (RISC).

It is found in the cytoplasm. Functionally, component of the large ribosomal subunit. The ribosome is a large ribonucleoprotein complex responsible for the synthesis of proteins in the cell. The chain is Large ribosomal subunit protein eL8 (RPL7A) from Bos taurus (Bovine).